Here is a 252-residue protein sequence, read N- to C-terminus: Phosphate import ATP-binding protein PstB 1 (252 aa).

The 242-residue stretch at 6 to 247 (LQIRDLSVYY…PKRKETEDYI (242 aa)) folds into the ABC transporter domain. Residue 38–45 (GPSGSGKS) participates in ATP binding.

It belongs to the ABC transporter superfamily. Phosphate importer (TC 3.A.1.7) family. The complex is composed of two ATP-binding proteins (PstB), two transmembrane proteins (PstC and PstA) and a solute-binding protein (PstS).

It localises to the cell membrane. It catalyses the reaction phosphate(out) + ATP + H2O = ADP + 2 phosphate(in) + H(+). Part of the ABC transporter complex PstSACB involved in phosphate import. Responsible for energy coupling to the transport system. The polypeptide is Phosphate import ATP-binding protein PstB 1 (Streptococcus pyogenes serotype M6 (strain ATCC BAA-946 / MGAS10394)).